The sequence spans 240 residues: Phosphoribosylaminoimidazole-succinocarboxamide synthase (240 aa).

Belongs to the SAICAR synthetase family.

The enzyme catalyses 5-amino-1-(5-phospho-D-ribosyl)imidazole-4-carboxylate + L-aspartate + ATP = (2S)-2-[5-amino-1-(5-phospho-beta-D-ribosyl)imidazole-4-carboxamido]succinate + ADP + phosphate + 2 H(+). It participates in purine metabolism; IMP biosynthesis via de novo pathway; 5-amino-1-(5-phospho-D-ribosyl)imidazole-4-carboxamide from 5-amino-1-(5-phospho-D-ribosyl)imidazole-4-carboxylate: step 1/2. This Wolbachia pipientis subsp. Culex pipiens (strain wPip) protein is Phosphoribosylaminoimidazole-succinocarboxamide synthase.